Consider the following 953-residue polypeptide: Nonsense-mediated mRNA decay factor SMG8 (953 aa).

Disordered regions lie at residues A571–P604 and P629–T653. Over residues D573–P586 the composition is skewed to acidic residues. The span at I595–P604 shows a compositional bias: polar residues. Low complexity predominate over residues S634–T653.

This sequence belongs to the SMG8 family.

Functionally, involved in nonsense-mediated decay (NMD) of mRNAs containing premature stop codons. Probable component of kinase complex containing nonC and recruited to stalled ribosomes. The polypeptide is Nonsense-mediated mRNA decay factor SMG8 (Drosophila pseudoobscura pseudoobscura (Fruit fly)).